Reading from the N-terminus, the 283-residue chain is Biotin synthase (283 aa).

In terms of domain architecture, Radical SAM core spans 3–232 (KISNEIFLCS…NTRLMIAGGR (230 aa)). Residues C21, C25, and C28 each coordinate [4Fe-4S] cluster. [2Fe-2S] cluster-binding residues include C65, C100, and R225.

The protein belongs to the radical SAM superfamily. Biotin synthase family. As to quaternary structure, homodimer. Requires [4Fe-4S] cluster as cofactor. The cofactor is [2Fe-2S] cluster.

The enzyme catalyses (4R,5S)-dethiobiotin + (sulfur carrier)-SH + 2 reduced [2Fe-2S]-[ferredoxin] + 2 S-adenosyl-L-methionine = (sulfur carrier)-H + biotin + 2 5'-deoxyadenosine + 2 L-methionine + 2 oxidized [2Fe-2S]-[ferredoxin]. It participates in cofactor biosynthesis; biotin biosynthesis; biotin from 7,8-diaminononanoate: step 2/2. Its function is as follows. Catalyzes the conversion of dethiobiotin (DTB) to biotin by the insertion of a sulfur atom into dethiobiotin via a radical-based mechanism. The chain is Biotin synthase from Helicobacter hepaticus (strain ATCC 51449 / 3B1).